Reading from the N-terminus, the 468-residue chain is Arginine biosynthesis bifunctional protein ArgJ, mitochondrial (468 aa).

Residues 1–23 constitute a mitochondrion transit peptide; the sequence is MVGFSRCALSQLRQPKAQLVRSF. T198, K227, T238, E324, N463, and T468 together coordinate substrate. T238 (nucleophile) is an active-site residue.

This sequence belongs to the ArgJ family. As to quaternary structure, heterodimer of an alpha and a beta chain. In terms of processing, the alpha and beta chains are autoproteolytically processed from a single precursor protein within the mitochondrion.

The protein resides in the mitochondrion matrix. The catalysed reaction is N(2)-acetyl-L-ornithine + L-glutamate = N-acetyl-L-glutamate + L-ornithine. It carries out the reaction L-glutamate + acetyl-CoA = N-acetyl-L-glutamate + CoA + H(+). It participates in amino-acid biosynthesis; L-arginine biosynthesis; L-ornithine and N-acetyl-L-glutamate from L-glutamate and N(2)-acetyl-L-ornithine (cyclic): step 1/1. It functions in the pathway amino-acid biosynthesis; L-arginine biosynthesis; N(2)-acetyl-L-ornithine from L-glutamate: step 1/4. Catalyzes two activities which are involved in the cyclic version of arginine biosynthesis: the synthesis of acetylglutamate from glutamate and acetyl-CoA, and of ornithine by transacetylation between acetylornithine and glutamate. This chain is Arginine biosynthesis bifunctional protein ArgJ, mitochondrial, found in Podospora anserina (strain S / ATCC MYA-4624 / DSM 980 / FGSC 10383) (Pleurage anserina).